The following is a 103-amino-acid chain: Small ribosomal subunit protein uS10 (103 aa).

It belongs to the universal ribosomal protein uS10 family. In terms of assembly, part of the 30S ribosomal subunit.

Functionally, involved in the binding of tRNA to the ribosomes. The protein is Small ribosomal subunit protein uS10 of Idiomarina loihiensis (strain ATCC BAA-735 / DSM 15497 / L2-TR).